The sequence spans 369 residues: 4-hydroxy-3-methylbut-2-en-1-yl diphosphate synthase (flavodoxin) (369 aa).

Residues C270, C273, C305, and E312 each contribute to the [4Fe-4S] cluster site.

This sequence belongs to the IspG family. [4Fe-4S] cluster serves as cofactor.

It carries out the reaction (2E)-4-hydroxy-3-methylbut-2-enyl diphosphate + oxidized [flavodoxin] + H2O + 2 H(+) = 2-C-methyl-D-erythritol 2,4-cyclic diphosphate + reduced [flavodoxin]. It functions in the pathway isoprenoid biosynthesis; isopentenyl diphosphate biosynthesis via DXP pathway; isopentenyl diphosphate from 1-deoxy-D-xylulose 5-phosphate: step 5/6. Its function is as follows. Converts 2C-methyl-D-erythritol 2,4-cyclodiphosphate (ME-2,4cPP) into 1-hydroxy-2-methyl-2-(E)-butenyl 4-diphosphate. The polypeptide is 4-hydroxy-3-methylbut-2-en-1-yl diphosphate synthase (flavodoxin) (Pseudomonas fluorescens (strain Pf0-1)).